Consider the following 197-residue polypeptide: Protein SPMIP2 (197 aa).

Positions 161–197 (SKAALPIGSRPPKLPKLPKKEEKSKFRPLHQHDARCY) are disordered. A compositionally biased stretch (basic and acidic residues) spans 178–197 (PKKEEKSKFRPLHQHDARCY).

This Bos taurus (Bovine) protein is Protein SPMIP2 (SPMIP2).